The chain runs to 308 residues: uncharacterized protein (308 aa).

Residues 5–236 enclose the ABC transporter domain; sequence LELQQLKKTY…LKSETFILDL (232 aa). 38–45 serves as a coordination point for ATP; the sequence is GPNGAGKS.

Belongs to the ABC transporter superfamily.

This is an uncharacterized protein from Escherichia coli (strain K12).